The sequence spans 313 residues: D-alanine--D-alanine ligase (313 aa).

The 196-residue stretch at lysine 114–serine 309 folds into the ATP-grasp domain. Aspartate 142–threonine 195 contacts ATP. Mg(2+)-binding residues include aspartate 263, glutamate 276, and asparagine 278.

The protein belongs to the D-alanine--D-alanine ligase family. Mg(2+) serves as cofactor. The cofactor is Mn(2+).

It localises to the cytoplasm. The enzyme catalyses 2 D-alanine + ATP = D-alanyl-D-alanine + ADP + phosphate + H(+). The protein operates within cell wall biogenesis; peptidoglycan biosynthesis. Cell wall formation. The sequence is that of D-alanine--D-alanine ligase from Hydrogenovibrio crunogenus (strain DSM 25203 / XCL-2) (Thiomicrospira crunogena).